The following is a 213-amino-acid chain: UPF0056 membrane protein AF_2111 (213 aa).

Transmembrane regions (helical) follow at residues methionine 1 to isoleucine 21, isoleucine 51 to phenylalanine 71, isoleucine 75 to leucine 95, valine 118 to leucine 138, alanine 142 to valine 162, and alanine 181 to phenylalanine 201.

This sequence belongs to the UPF0056 (MarC) family.

The protein localises to the cell membrane. In Archaeoglobus fulgidus (strain ATCC 49558 / DSM 4304 / JCM 9628 / NBRC 100126 / VC-16), this protein is UPF0056 membrane protein AF_2111.